A 193-amino-acid polypeptide reads, in one-letter code: MSAKQPNRKPTGKRKESDASALDGRERKRAAKRKGLKAGSRQQAEQSSKNNNGKQAKDPRIGSRKPVALIVDEKGAKPVAPKPAKEKKLVMTPEQELAAIENDDRLNDLLDRLDAGETLEATEQAWVDQRVDRYQELMDELGIIDNDDDEEDDGSFDDASYEAPTQPASEEELWDRFTQVDYQPEPKPEPKKK.

Residues 1-12 (MSAKQPNRKPTG) show a composition bias toward basic residues. Disordered regions lie at residues 1–91 (MSAK…KLVM) and 143–193 (IIDN…PKKK). A compositionally biased stretch (basic and acidic residues) spans 13 to 26 (KRKESDASALDGRE). Basic residues predominate over residues 27–36 (RKRAAKRKGL). Polar residues predominate over residues 40 to 54 (SRQQAEQSSKNNNGK). Positions 145-160 (DNDDDEEDDGSFDDAS) are enriched in acidic residues. Residues 184 to 193 (PEPKPEPKKK) show a composition bias toward basic and acidic residues.

It belongs to the YihI family. Interacts with Der.

A GTPase-activating protein (GAP) that modifies Der/EngA GTPase function. May play a role in ribosome biogenesis. This chain is Der GTPase-activating protein YihI, found in Aeromonas salmonicida (strain A449).